A 278-amino-acid chain; its full sequence is 2-dehydro-3-deoxyphosphooctonate aldolase (278 aa).

This sequence belongs to the KdsA family.

The protein localises to the cytoplasm. The catalysed reaction is D-arabinose 5-phosphate + phosphoenolpyruvate + H2O = 3-deoxy-alpha-D-manno-2-octulosonate-8-phosphate + phosphate. It participates in carbohydrate biosynthesis; 3-deoxy-D-manno-octulosonate biosynthesis; 3-deoxy-D-manno-octulosonate from D-ribulose 5-phosphate: step 2/3. Its pathway is bacterial outer membrane biogenesis; lipopolysaccharide biosynthesis. In Bartonella tribocorum (strain CIP 105476 / IBS 506), this protein is 2-dehydro-3-deoxyphosphooctonate aldolase.